We begin with the raw amino-acid sequence, 376 residues long: O-demethylpuromycin-O-methyltransferase (376 aa).

The disordered stretch occupies residues 1–28 (MAPTEATRGGPADPAPAPEAHRGGHTEH). Residues 19–28 (EAHRGGHTEH) are compositionally biased toward basic and acidic residues. S-adenosyl-L-methionine contacts are provided by residues Asp-235 and 261–263 (GDF). His-281 serves as the catalytic Proton acceptor.

Belongs to the class I-like SAM-binding methyltransferase superfamily. Cation-independent O-methyltransferase family.

The enzyme catalyses O-demethylpuromycin + S-adenosyl-L-methionine = puromycin + S-adenosyl-L-homocysteine + H(+). This chain is O-demethylpuromycin-O-methyltransferase (dmpM), found in Streptomyces alboniger.